We begin with the raw amino-acid sequence, 263 residues long: Hydroxyethylthiazole kinase (263 aa).

Residue Met-39 coordinates substrate. Residues Lys-115 and Thr-160 each coordinate ATP. Gly-187 serves as a coordination point for substrate.

This sequence belongs to the Thz kinase family. Mg(2+) is required as a cofactor.

The enzyme catalyses 5-(2-hydroxyethyl)-4-methylthiazole + ATP = 4-methyl-5-(2-phosphooxyethyl)-thiazole + ADP + H(+). The protein operates within cofactor biosynthesis; thiamine diphosphate biosynthesis; 4-methyl-5-(2-phosphoethyl)-thiazole from 5-(2-hydroxyethyl)-4-methylthiazole: step 1/1. Catalyzes the phosphorylation of the hydroxyl group of 4-methyl-5-beta-hydroxyethylthiazole (THZ). The polypeptide is Hydroxyethylthiazole kinase (Staphylococcus aureus (strain bovine RF122 / ET3-1)).